A 1021-amino-acid polypeptide reads, in one-letter code: Sodium/potassium-transporting ATPase subunit alpha-1 (1021 aa).

Residues 1–5 (MGKGV) constitute a propeptide that is removed on maturation. The span at 1-11 (MGKGVGRDKYE) shows a compositional bias: basic and acidic residues. Residues 1-36 (MGKGVGRDKYEPAAVSEHGDKKKAKKERDMDELKKE) form a disordered region. At 4 to 85 (GVGRDKYEPA…NALTPPPTTP (82 aa)) the chain is on the cytoplasmic side. Residue K9 is modified to N6-acetyllysine. Phosphotyrosine is present on Y10. The residue at position 16 (S16) is a Phosphoserine; by PKC. K21 is modified (N6-acetyllysine). Positions 26-36 (KERDMDELKKE) are enriched in basic and acidic residues. Phosphoserine occurs at positions 38 and 45. The tract at residues 80-82 (PPP) is phosphoinositide-3 kinase binding. Residues 86–106 (EWVKFCRQLFGGFSMLLWIGA) traverse the membrane as a helical segment. The Extracellular segment spans residues 107 to 129 (ILCFLAYGIQAATEEEPQNDNLY). A helical transmembrane segment spans residues 130–150 (LGVVLSAVVIITGCFSYYQEA). Residues 151-286 (KSSKIMESFK…GGQTPIAAEI (136 aa)) are Cytoplasmic-facing. The interval 214-233 (SSLTGESEPQTRSPDFTNEN) is disordered. Residue S226 is modified to Phosphoserine. Y258 carries the post-translational modification Phosphotyrosine. Residues 287–306 (EHFIHIITGVAVFLGVSFFI) traverse the membrane as a helical segment. Over 307-318 (LSLILEYTWLEA) the chain is Extracellular. Residues 319-336 (VIFLIGIIVANVPEGLLA) traverse the membrane as a helical segment. Residues 337–770 (TVTVCLTLTA…EEGRLIFDNL (434 aa)) lie on the Cytoplasmic side of the membrane. The 4-aspartylphosphate intermediate role is filled by D374. A phosphoserine mark is found at S450 and S482. K485 contributes to the ATP binding site. Residue Y540 is modified to Phosphotyrosine. Residues 594-715 (RAAVPDAVGK…QGAIVAVTGD (122 aa)) are mediates interaction with SCN7A. K659 bears the N6-succinyllysine mark. A phosphoserine mark is found at S666 and S673. D715 and D719 together coordinate Mg(2+). A helical transmembrane segment spans residues 771–790 (KKSIAYTLTSNIPEITPFLI). Residues 791-800 (FIIANIPLPL) lie on the Extracellular side of the membrane. The chain crosses the membrane as a helical span at residues 801–821 (GTVTILCIDLGTDMVPAISLA). At 822–841 (YEQAESDIMKRQPRNPKTDK) the chain is on the cytoplasmic side. The helical transmembrane segment at 842–864 (LVNERLISMAYGQIGMIQALGGF) threads the bilayer. The Extracellular portion of the chain corresponds to 865–916 (FTYFVILAENGFLPTHLLGLRVDWDDRWINDVEDSYGQQWTYEQRKIVEFTC). Residues 917–936 (HTAFFVSIVVVQWADLVICK) traverse the membrane as a helical segment. The Cytoplasmic portion of the chain corresponds to 937–949 (TRRNSVFQQGMKN). Residue S941 is modified to Phosphoserine; by PKA. The chain crosses the membrane as a helical span at residues 950-968 (KILIFGLFEETALAAFLSY). The Extracellular portion of the chain corresponds to 969 to 983 (CPGMGVALRMYPLKP). The chain crosses the membrane as a helical span at residues 984–1004 (TWWFCAFPYSLLIFVYDEVRK). Residues 1005 to 1021 (LIIRRRPGGWVEKETYY) are Cytoplasmic-facing.

The protein belongs to the cation transport ATPase (P-type) (TC 3.A.3) family. Type IIC subfamily. The sodium/potassium-transporting ATPase is composed of a catalytic alpha subunit, an auxiliary non-catalytic beta subunit and an additional regulatory subunit. Interacts with regulatory subunit FXYD1. Interacts with regulatory subunit FXYD3. Interacts with SIK1. Interacts with SLC35G1 and STIM1. Interacts with CLN3; this interaction regulates the sodium/potassium-transporting ATPase complex localization at the plasma membrane. Interacts with SCN7A; activates ATP1A1 P-type sodium:potassium-exchanging transporter activity which indirectly signals to nearby neurons to regulate sodium homeostasis. In terms of processing, phosphorylation on Tyr-10 modulates pumping activity. Phosphorylation of Ser-941 by PKA modulates the response of ATP1A1 to PKC. Dephosphorylation by protein phosphatase 2A (PP2A) following increases in intracellular sodium, leading to increase catalytic activity.

It is found in the cell membrane. The protein localises to the basolateral cell membrane. Its subcellular location is the sarcolemma. The protein resides in the cell projection. It localises to the axon. It is found in the melanosome. The catalysed reaction is K(+)(out) + Na(+)(in) + ATP + H2O = K(+)(in) + Na(+)(out) + ADP + phosphate + H(+). In terms of biological role, this is the catalytic component of the active enzyme, which catalyzes the hydrolysis of ATP coupled with the exchange of sodium and potassium ions across the plasma membrane. This action creates the electrochemical gradient of sodium and potassium ions, providing the energy for active transport of various nutrients. Could also be part of an osmosensory signaling pathway that senses body-fluid sodium levels and controls salt intake behavior as well as voluntary water intake to regulate sodium homeostasis. This is Sodium/potassium-transporting ATPase subunit alpha-1 (ATP1A1) from Canis lupus familiaris (Dog).